We begin with the raw amino-acid sequence, 212 residues long: ATP-dependent dethiobiotin synthetase BioD (212 aa).

13–18 (GIGKTV) contacts ATP. Thr17 is a Mg(2+) binding site. Lys33 is a catalytic residue. A substrate-binding site is contributed by Ser37. A Mg(2+)-binding site is contributed by Glu100. Residues 100–103 (EGAG) and 184–186 (PRL) contribute to the ATP site.

The protein belongs to the dethiobiotin synthetase family. Homodimer. Mg(2+) serves as cofactor.

It is found in the cytoplasm. It catalyses the reaction (7R,8S)-7,8-diammoniononanoate + CO2 + ATP = (4R,5S)-dethiobiotin + ADP + phosphate + 3 H(+). It functions in the pathway cofactor biosynthesis; biotin biosynthesis; biotin from 7,8-diaminononanoate: step 1/2. In terms of biological role, catalyzes a mechanistically unusual reaction, the ATP-dependent insertion of CO2 between the N7 and N8 nitrogen atoms of 7,8-diaminopelargonic acid (DAPA, also called 7,8-diammoniononanoate) to form a ureido ring. The sequence is that of ATP-dependent dethiobiotin synthetase BioD from Agrobacterium fabrum (strain C58 / ATCC 33970) (Agrobacterium tumefaciens (strain C58)).